A 319-amino-acid chain; its full sequence is MDPQNQHGSGSSLVVIQQPALDNRQRLDYEREIQPAAILSLDQIKAIRGSNEYTEGPSVVKRPAPRTAPRQEKHERTHEIIPINVNNNYEHRPTSHLGHAGLSNNTRGPILSRSTSTGSAASSGSNSSASSEQGLLGRSPPTRPIPGHRSERAIRTQPKQLIVDDLKGSLKEDLTQHKFICEQCGKCKCGECTAPRTLPSCLACNRQCLCSAESMVEYGTCMCLVKGIFYHCSNDDEGDSYSDNPCSCSQSQCCSRYLCMGAMSLFLPCLLCYPPAKGCLKLCRGCYDWIHRPGCRCKNSNTVYCKLESCPSRGLGKPS.

Residue Met1 is modified to N-acetylmethionine. Positions 54–157 (TEGPSVVKRP…HRSERAIRTQ (104 aa)) are disordered. Residues 69–79 (PRQEKHERTHE) are compositionally biased toward basic and acidic residues. The segment covering 112–131 (SRSTSTGSAASSGSNSSASS) has biased composition (low complexity). One can recognise an SPR domain in the interval 183–295 (QCGKCKCGEC…CYDWIHRPGC (113 aa)).

This sequence belongs to the sprouty family. In terms of assembly, forms heterodimers with SPRY2. Interacts with TESK1. Interacts with CAV1 (via C-terminus).

The protein resides in the cytoplasm. The protein localises to the membrane. In terms of biological role, inhibits fibroblast growth factor (FGF)-induced retinal lens fiber differentiation, probably by inhibiting FGF-mediated phosphorylation of ERK1/2. Inhibits TGFB-induced epithelial-to-mesenchymal transition in lens epithelial cells. The sequence is that of Protein sprouty homolog 1 (SPRY1) from Bos taurus (Bovine).